A 323-amino-acid polypeptide reads, in one-letter code: 3-dehydroquinate synthase (323 aa).

Belongs to the archaeal-type DHQ synthase family.

The catalysed reaction is 2-amino-2,3,7-trideoxy-D-lyxo-hept-6-ulosonate + NAD(+) + H2O = 3-dehydroquinate + NH4(+) + NADH + H(+). Functionally, catalyzes the oxidative deamination and cyclization of 2-amino-3,7-dideoxy-D-threo-hept-6-ulosonic acid (ADH) to yield 3-dehydroquinate (DHQ), which is fed into the canonical shikimic pathway of aromatic amino acid biosynthesis. This chain is 3-dehydroquinate synthase, found in Archaeoglobus fulgidus (strain ATCC 49558 / DSM 4304 / JCM 9628 / NBRC 100126 / VC-16).